Consider the following 193-residue polypeptide: Potassium-transporting ATPase KdpC subunit (193 aa).

A helical transmembrane segment spans residues 8 to 28 (VVLLIFLTLITGVAYPLLATG).

Belongs to the KdpC family. The system is composed of three essential subunits: KdpA, KdpB and KdpC.

The protein resides in the cell inner membrane. Part of the high-affinity ATP-driven potassium transport (or Kdp) system, which catalyzes the hydrolysis of ATP coupled with the electrogenic transport of potassium into the cytoplasm. This subunit acts as a catalytic chaperone that increases the ATP-binding affinity of the ATP-hydrolyzing subunit KdpB by the formation of a transient KdpB/KdpC/ATP ternary complex. This chain is Potassium-transporting ATPase KdpC subunit, found in Photorhabdus laumondii subsp. laumondii (strain DSM 15139 / CIP 105565 / TT01) (Photorhabdus luminescens subsp. laumondii).